The primary structure comprises 254 residues: 4-hydroxy-tetrahydrodipicolinate reductase (254 aa).

NAD(+)-binding positions include 8–13 (GCSGKM), D35, 86–88 (CST), and 110–113 (SANM). Residue H143 is the Proton donor/acceptor of the active site. H144 provides a ligand contact to (S)-2,3,4,5-tetrahydrodipicolinate. The active-site Proton donor is K147. 153–154 (GT) is a binding site for (S)-2,3,4,5-tetrahydrodipicolinate.

This sequence belongs to the DapB family.

It is found in the cytoplasm. The catalysed reaction is (S)-2,3,4,5-tetrahydrodipicolinate + NAD(+) + H2O = (2S,4S)-4-hydroxy-2,3,4,5-tetrahydrodipicolinate + NADH + H(+). The enzyme catalyses (S)-2,3,4,5-tetrahydrodipicolinate + NADP(+) + H2O = (2S,4S)-4-hydroxy-2,3,4,5-tetrahydrodipicolinate + NADPH + H(+). It participates in amino-acid biosynthesis; L-lysine biosynthesis via DAP pathway; (S)-tetrahydrodipicolinate from L-aspartate: step 4/4. Functionally, catalyzes the conversion of 4-hydroxy-tetrahydrodipicolinate (HTPA) to tetrahydrodipicolinate. The protein is 4-hydroxy-tetrahydrodipicolinate reductase of Clostridium perfringens (strain SM101 / Type A).